We begin with the raw amino-acid sequence, 654 residues long: Polyvinylalcohol dehydrogenase (654 aa).

A signal peptide spans 1–32 (MGSHAWGGAVFSAATLIAFGSVVHASGTVAET). A Cytochrome c domain is found at 42–159 (ADQLDGETLY…AANQWNGWST (118 aa)). Heme c is bound by residues Cys-55, Cys-58, and His-59.

Belongs to the bacterial PQQ dehydrogenase family. Monomer. The cofactor is pyrroloquinoline quinone.

It is found in the periplasm. It carries out the reaction a polyvinyl alcohol + 2n Fe(III)-[cytochrome c] = an oxidized polyvinyl alcohol + 2n Fe(II)-[cytochrome c] + 2n H(+). Its function is as follows. Catalyzes the oxidation of polyvinyl alcohol (PVA) in the polyvinyl alcohol degradation pathway. The protein is Polyvinylalcohol dehydrogenase (pvadh) of Sphingopyxis sp. (strain 113P3).